The chain runs to 324 residues: Biotin synthase (324 aa).

A Radical SAM core domain is found at 50 to 278 (HAGPAFTCAI…QADILVAGGR (229 aa)). [4Fe-4S] cluster contacts are provided by C67, C71, and C74. C143 and C203 together coordinate [2Fe-2S] cluster.

This sequence belongs to the radical SAM superfamily. Biotin synthase family. As to quaternary structure, homodimer. The cofactor is [4Fe-4S] cluster. Requires [2Fe-2S] cluster as cofactor.

The catalysed reaction is (4R,5S)-dethiobiotin + (sulfur carrier)-SH + 2 reduced [2Fe-2S]-[ferredoxin] + 2 S-adenosyl-L-methionine = (sulfur carrier)-H + biotin + 2 5'-deoxyadenosine + 2 L-methionine + 2 oxidized [2Fe-2S]-[ferredoxin]. The protein operates within cofactor biosynthesis; biotin biosynthesis; biotin from 7,8-diaminononanoate: step 2/2. Its function is as follows. Catalyzes the conversion of dethiobiotin (DTB) to biotin by the insertion of a sulfur atom into dethiobiotin via a radical-based mechanism. This Oleidesulfovibrio alaskensis (strain ATCC BAA-1058 / DSM 17464 / G20) (Desulfovibrio alaskensis) protein is Biotin synthase.